A 308-amino-acid chain; its full sequence is Acetaldehyde dehydrogenase (308 aa).

Residue 10-13 (SGNI) coordinates NAD(+). Cys128 (acyl-thioester intermediate) is an active-site residue. NAD(+)-binding positions include 159 to 167 (SAGPGTRAN) and Asn285.

It belongs to the acetaldehyde dehydrogenase family.

It carries out the reaction acetaldehyde + NAD(+) + CoA = acetyl-CoA + NADH + H(+). In Salinispora tropica (strain ATCC BAA-916 / DSM 44818 / JCM 13857 / NBRC 105044 / CNB-440), this protein is Acetaldehyde dehydrogenase.